The sequence spans 40 residues: Sulfur globule protein TR2 (40 aa).

The protein to C.vinosum CV3. In terms of assembly, the protein envelope of the sulfur globules is composed of the three different proteins TR0, TR1 and TR2.

Structural protein of the sulfur globules, which are intracellular globules that serve for sulfur storage in purple sulfur bacteria. The chain is Sulfur globule protein TR2 from Thiocapsa roseopersicina.